Here is a 392-residue protein sequence, read N- to C-terminus: Formate-dependent phosphoribosylglycinamide formyltransferase (392 aa).

Residues 22–23 (EL) and Glu-82 each bind N(1)-(5-phospho-beta-D-ribosyl)glycinamide. ATP-binding positions include Arg-114, Lys-155, 160 to 165 (SSGKGQ), 195 to 198 (EGVV), and Glu-203. Residues 119–308 (RLAAEELQLP…EFALHVRAFL (190 aa)) enclose the ATP-grasp domain. Residues Glu-267 and Glu-279 each contribute to the Mg(2+) site. Residues Asp-286, Lys-355, and 362–363 (RR) contribute to the N(1)-(5-phospho-beta-D-ribosyl)glycinamide site.

It belongs to the PurK/PurT family. As to quaternary structure, homodimer.

The catalysed reaction is N(1)-(5-phospho-beta-D-ribosyl)glycinamide + formate + ATP = N(2)-formyl-N(1)-(5-phospho-beta-D-ribosyl)glycinamide + ADP + phosphate + H(+). It participates in purine metabolism; IMP biosynthesis via de novo pathway; N(2)-formyl-N(1)-(5-phospho-D-ribosyl)glycinamide from N(1)-(5-phospho-D-ribosyl)glycinamide (formate route): step 1/1. Involved in the de novo purine biosynthesis. Catalyzes the transfer of formate to 5-phospho-ribosyl-glycinamide (GAR), producing 5-phospho-ribosyl-N-formylglycinamide (FGAR). Formate is provided by PurU via hydrolysis of 10-formyl-tetrahydrofolate. The protein is Formate-dependent phosphoribosylglycinamide formyltransferase of Escherichia coli O1:K1 / APEC.